The following is a 253-amino-acid chain: MSCTIEKALADAKALVERLRDHDDAAESLIEQTTALNKRVEAMKQYQEEIQELNEVARHRPRSTLVMGIQQENRQIRELQQENKELRTSLEEHQSALELIMSKYREQMFRLLMASKKDDPGIIMKLKEQHSKIDMVHRNKSEGFFLDASRHILEAPQHGLERRHLEANQNELQAHVDQITEMAAVMRKAIEIDEQQGCKEQERIFQLEQENKGLREILQITRESFLNLRKDDASESTSLSALVTNSDLSLRKS.

Residues 5-104 (IEKALADAKA…SALELIMSKY (100 aa)) adopt a coiled-coil conformation. A Phosphoserine modification is found at Ser141. Positions 160–223 (LERRHLEANQ…LREILQITRE (64 aa)) form a coiled coil. The segment at 231–253 (DDASESTSLSALVTNSDLSLRKS) is disordered. The segment covering 235–253 (ESTSLSALVTNSDLSLRKS) has biased composition (polar residues).

It belongs to the SIKE family. As to expression, expressed in bone marrow, spleen and thymus.

It is found in the cytoplasm. In terms of biological role, may be involved in wound healing pathway. This is FGFR1 oncogene partner 2 (FGFR1OP2) from Homo sapiens (Human).